Consider the following 1067-residue polypeptide: Protein bric-a-brac 2 (1067 aa).

The tract at residues methionine 30–valine 121 is disordered. Composition is skewed to basic and acidic residues over residues histidine 47–glutamate 62 and lysine 86–lysine 98. A Phosphotyrosine modification is found at tyrosine 55. Serine 56, serine 87, and serine 147 each carry phosphoserine. In terms of domain architecture, BTB spans valine 223–glutamine 288. Disordered stretches follow at residues glycine 312–proline 412, alanine 444–histidine 505, and glycine 525–aspartate 563. Residues phenylalanine 326–leucine 335 are compositionally biased toward acidic residues. Serine 377 carries the phosphoserine modification. At threonine 384 the chain carries Phosphothreonine. Residues glycine 391–proline 412 show a composition bias toward low complexity. 2 stretches are compositionally biased toward gly residues: residues glycine 525 to serine 538 and glycine 545 to alanine 556. Positions phenylalanine 635–methionine 687 constitute an HTH psq-type domain. Positions arginine 645–proline 690 form a DNA-binding region, H-T-H motif. The a.T hook DNA-binding region spans aspartate 697–arginine 708. Disordered stretches follow at residues glutamine 796–glutamine 829, alanine 860–serine 879, and valine 891–alanine 967. The segment covering alanine 812–glutamine 829 has biased composition (low complexity). Residues alanine 904–arginine 914 are compositionally biased toward low complexity. Basic and acidic residues predominate over residues glutamate 915–serine 933. The span at arginine 934 to serine 949 shows a compositional bias: low complexity.

As to expression, leg imaginal disk at the central region of the tarsus and in eye antenna disk at the basal cylinder.

The protein resides in the nucleus. Functionally, probably acts as a transcriptional regulator. Required for the specification of the tarsal segment. Also involved in antenna development. This Drosophila melanogaster (Fruit fly) protein is Protein bric-a-brac 2 (bab2).